A 625-amino-acid polypeptide reads, in one-letter code: Pentatricopeptide repeat-containing protein At2g36980, mitochondrial (625 aa).

Residues 1-7 (MSVLVRL) constitute a mitochondrion transit peptide. PPR repeat units lie at residues 3-33 (VLVRLTSKIASLAKSGRIASARQVFDGMPEL), 34-68 (DTVAWNTMLTSYSRLGLHQEAIALFTQLRFSDAKP), 69-103 (DDYSFTAILSTCASLGNVKFGRKIQSLVIRSGFCA), 104-134 (SLPVNNSLIDMYGKCSDTLSANKVFRDMCCD), 137-167 (NEVTWCSLLFAYMNAEQFEAALDVFVEMPKR), 168-202 (VAFAWNIMISGHAHCGKLESCLSLFKEMLESEFKP), 203-238 (DCYTFSSLMNACSADSSNVVYGRMVHAVMLKNGWSS), 239-269 (AVEAKNSVLSFYTKLGSRDDAMRELESIEVL), 270-300 (TQVSWNSIIDACMKIGETEKALEVFHLAPEK), 301-335 (NIVTWTTMITGYGRNGDGEQALRFFVEMMKSGVDS), 336-370 (DHFAYGAVLHACSGLALLGHGKMIHGCLIHCGFQG), 371-401 (YAYVGNALVNLYAKCGDIKEADRAFGDIANK), 402-436 (DLVSWNTMLFAFGVHGLADQALKLYDNMIASGIKP), 437-471 (DNVTFIGLLTTCSHSGLVEEGCMIFESMVKDYRIP), and 473-503 (EVDHVTCMIDMFGRGGHLAEAKDLATTYSSL). Residues 512 to 587 (SWETLLGACS…TPGCSWIEVG (76 aa)) form a type E motif region. Positions 588 to 618 (NQVSTFVVGDSSHPRLEELSETLNCLQHEMR) are type E(+) motif.

It belongs to the PPR family. PCMP-E subfamily.

It localises to the mitochondrion. This Arabidopsis thaliana (Mouse-ear cress) protein is Pentatricopeptide repeat-containing protein At2g36980, mitochondrial (PCMP-E73).